Reading from the N-terminus, the 80-residue chain is Peroxidase (80 aa).

Residues 56 to 80 (DANEAEANSDLPGFNSSRSELEAAF) form a disordered region. Position 67 (P67) interacts with substrate. An N-linked (GlcNAc...) asparagine glycan is attached at N70.

The protein belongs to the peroxidase family. Classical plant (class III) peroxidase subfamily. Requires Ca(2+) as cofactor. The cofactor is heme b.

It catalyses the reaction 2 a phenolic donor + H2O2 = 2 a phenolic radical donor + 2 H2O. Functionally, removal of H(2)O(2), oxidation of toxic reductants, biosynthesis and degradation of lignin, suberization, auxin catabolism, response to environmental stresses such as wounding, pathogen attack and oxidative stress. These functions might be dependent on each isozyme/isoform in each plant tissue. In Triticum aestivum (Wheat), this protein is Peroxidase.